A 150-amino-acid polypeptide reads, in one-letter code: SPbeta prophage-derived uncharacterized protein YoqH (150 aa).

Residues 1-23 (MKRFILVLSFLSIIVAYPIQTNA) form the signal peptide.

In Bacillus subtilis (strain 168), this protein is SPbeta prophage-derived uncharacterized protein YoqH (yoqH).